A 903-amino-acid polypeptide reads, in one-letter code: KAT8 regulatory NSL complex subunit 1-like protein (903 aa).

Disordered stretches follow at residues 319–343 (DSDA…DECN), 419–441 (MPKS…PSSP), and 652–676 (TECT…HRSE). 2 stretches are compositionally biased toward polar residues: residues 423-441 (PQGT…PSSP) and 652-661 (TECTSSYSPD). Positions 748 to 862 (EIITPSWKEV…ESPKGKTIHW (115 aa)) constitute a PEHE domain.

The polypeptide is KAT8 regulatory NSL complex subunit 1-like protein (kansl1l) (Xenopus tropicalis (Western clawed frog)).